Reading from the N-terminus, the 536-residue chain is Membrane protein insertase YidC (536 aa).

A helical membrane pass occupies residues 7 to 27 (IIAVVLSLFVLIGWSYLSEFM). The tract at residues 43-70 (VQQKASEPVAQPVQTASAPAASSFAPTE) is disordered. Over residues 58–68 (ASAPAASSFAP) the composition is skewed to low complexity. Transmembrane regions (helical) follow at residues 346–366 (GNYG…FWPL), 415–435 (GGCL…QGLL), and 495–515 (IMMF…AGLV).

The protein belongs to the OXA1/ALB3/YidC family. Type 1 subfamily. In terms of assembly, interacts with the Sec translocase complex via SecD. Specifically interacts with transmembrane segments of nascent integral membrane proteins during membrane integration.

The protein localises to the cell inner membrane. Its function is as follows. Required for the insertion and/or proper folding and/or complex formation of integral membrane proteins into the membrane. Involved in integration of membrane proteins that insert both dependently and independently of the Sec translocase complex, as well as at least some lipoproteins. Aids folding of multispanning membrane proteins. The sequence is that of Membrane protein insertase YidC from Oleidesulfovibrio alaskensis (strain ATCC BAA-1058 / DSM 17464 / G20) (Desulfovibrio alaskensis).